Here is a 201-residue protein sequence, read N- to C-terminus: Putative 3-methyladenine DNA glycosylase (201 aa).

This sequence belongs to the DNA glycosylase MPG family.

This Trichodesmium erythraeum (strain IMS101) protein is Putative 3-methyladenine DNA glycosylase.